Here is a 188-residue protein sequence, read N- to C-terminus: Cell division protein SepF (188 aa).

Belongs to the SepF family. Homodimer. Interacts with FtsZ.

It localises to the cytoplasm. Functionally, cell division protein that is part of the divisome complex and is recruited early to the Z-ring. Probably stimulates Z-ring formation, perhaps through the cross-linking of FtsZ protofilaments. Its function overlaps with FtsA. The sequence is that of Cell division protein SepF from Synechococcus sp. (strain CC9605).